Here is an 833-residue protein sequence, read N- to C-terminus: Leucine--tRNA ligase (833 aa).

Residues 41-52 carry the 'HIGH' region motif; that stretch reads PYPSGAGLHVGH. The short motif at 610–614 is the 'KMSKS' region element; that stretch reads KMSKS. Position 613 (Lys613) interacts with ATP.

It belongs to the class-I aminoacyl-tRNA synthetase family.

The protein localises to the cytoplasm. It carries out the reaction tRNA(Leu) + L-leucine + ATP = L-leucyl-tRNA(Leu) + AMP + diphosphate. This Streptococcus pyogenes serotype M4 (strain MGAS10750) protein is Leucine--tRNA ligase.